The chain runs to 541 residues: Chaperonin GroEL (541 aa).

ATP is bound by residues 29 to 32 (TLGP), 86 to 90 (DGTTT), Gly413, 478 to 480 (DAL), and Asp494.

It belongs to the chaperonin (HSP60) family. As to quaternary structure, forms a cylinder of 14 subunits composed of two heptameric rings stacked back-to-back. Interacts with the co-chaperonin GroES.

Its subcellular location is the cytoplasm. The enzyme catalyses ATP + H2O + a folded polypeptide = ADP + phosphate + an unfolded polypeptide.. Its function is as follows. Together with its co-chaperonin GroES, plays an essential role in assisting protein folding. The GroEL-GroES system forms a nano-cage that allows encapsulation of the non-native substrate proteins and provides a physical environment optimized to promote and accelerate protein folding. This is Chaperonin GroEL from Alkaliphilus oremlandii (strain OhILAs) (Clostridium oremlandii (strain OhILAs)).